The following is a 2383-amino-acid chain: Highly reducing polyketide synthase SAT13 (2383 aa).

The 428-residue stretch at 6–433 folds into the Ketosynthase family 3 (KS3) domain; sequence PVPLAIVGIA…GTNAHAVLER (428 aa). Catalysis depends on for beta-ketoacyl synthase activity residues Cys180, His315, and His355. The segment at 536–828 is malonyl-CoA:ACP transacylase (MAT) domain; that stretch reads FIFTGQGAQW…IGPHSALAGP (293 aa). The For malonyltransferase activity role is filled by Ser626. The interval 922 to 1062 is N-terminal hotdog fold; the sequence is HDLLGLRMTE…GNIVVVFKTS (141 aa). The tract at residues 922–1239 is dehydratase (DH) domain; sequence HDLLGLRMTE…GMELRSFVAR (318 aa). The 321-residue stretch at 922–1242 folds into the PKS/mFAS DH domain; that stretch reads HDLLGLRMTE…LRSFVARDSN (321 aa). His954 acts as the Proton acceptor; for dehydratase activity in catalysis. Residues 1087-1242 are C-terminal hotdog fold; the sequence is GKLTHAGQLY…LRSFVARDSN (156 aa). The active-site Proton donor; for dehydratase activity is Asp1152. The interval 1669 to 1977 is enoylreductase (ER) domain; that stretch reads DGQNRLVFVE…KQGSMKKCVL (309 aa). Positions 2001–2184 are catalytic ketoreductase (KRc) domain; that stretch reads ATYVVAGGLG…MSLNIGGIKD (184 aa). Residues 2287–2364 enclose the Carrier domain; sequence EISEFVARSI…DLAQKVVSRS (78 aa). Ser2324 bears the O-(pantetheine 4'-phosphoryl)serine mark.

It participates in mycotoxin biosynthesis. Functionally, highly reducing polyketide synthase; part of the satratoxin SC2 cluster involved in the biosynthesis of satratoxins, trichothecene mycotoxins that are associated with human food poisonings. Satratoxins are suggested to be made by products of multiple gene clusters (SC1, SC2 and SC3) that encode 21 proteins in all, including polyketide synthases, acetyltransferases, and other enzymes expected to modify the trichothecene skeleton. SC1 encodes 10 proteins, SAT1 to SAT10. The largest are SAT8, which encodes a putative polyketide synthase (PKS) with a conventional non-reducing architecture, and SAT10, a putative protein containing four ankyrin repeats and thus may be involved in protein scaffolding. The putative short-chain reductase SAT3 may assist the PKS in some capacity. SAT6 contains a secretory lipase domain and acts probably as a trichothecene esterase. SAT5 encodes a putative acetyltransferase, and so, with SAT6, may affect endogenous protection from toxicity. The probable transcription factor SAT9 may regulate the expression of the SC1 cluster. SC2 encodes proteins SAT11 to SAT16, the largest of which encodes the putative reducing PKS SAT13. SAT11 is a cytochrome P450 monooxygenase, while SAT14 and SAT16 are probable acetyltransferases. The SC2 cluster may be regulated by the transcription factor SAT15. SC3 is a small cluster that encodes 5 proteins, SAT17 to SAT21. SAT21 is a putative MFS-type transporter which may have a role in exporting secondary metabolites. The four other proteins putatively encoded in SC3 include the taurine hydroxylase-like protein SAT17, the O-methyltransferase SAT18, the acetyltransferase SAT19, and the Cys6-type zinc finger SAT20, the latter being probably involved in regulation of SC3 expression. This Stachybotrys chartarum (strain CBS 109288 / IBT 7711) (Toxic black mold) protein is Highly reducing polyketide synthase SAT13.